A 277-amino-acid polypeptide reads, in one-letter code: NH(3)-dependent NAD(+) synthetase (277 aa).

36 to 43 (GLSGGIDS) is a binding site for ATP. A Mg(2+)-binding site is contributed by Asp-42. Residue Arg-118 coordinates deamido-NAD(+). Thr-138 is an ATP binding site. Glu-143 contacts Mg(2+). ATP is bound by residues Lys-167 and Ser-189.

Belongs to the NAD synthetase family. Homodimer.

It carries out the reaction deamido-NAD(+) + NH4(+) + ATP = AMP + diphosphate + NAD(+) + H(+). Its pathway is cofactor biosynthesis; NAD(+) biosynthesis; NAD(+) from deamido-NAD(+) (ammonia route): step 1/1. In terms of biological role, catalyzes the ATP-dependent amidation of deamido-NAD to form NAD. Uses ammonia as a nitrogen source. In Chlorobium phaeobacteroides (strain BS1), this protein is NH(3)-dependent NAD(+) synthetase.